The primary structure comprises 286 residues: Elongation factor Ts (286 aa).

An involved in Mg(2+) ion dislocation from EF-Tu region spans residues 82 to 85 (TDFV).

It belongs to the EF-Ts family.

It is found in the cytoplasm. Associates with the EF-Tu.GDP complex and induces the exchange of GDP to GTP. It remains bound to the aminoacyl-tRNA.EF-Tu.GTP complex up to the GTP hydrolysis stage on the ribosome. In Desulfovibrio desulfuricans (strain ATCC 27774 / DSM 6949 / MB), this protein is Elongation factor Ts.